The primary structure comprises 241 residues: Probable transcriptional regulatory protein RALTA_A0859 (241 aa).

Belongs to the TACO1 family.

It localises to the cytoplasm. This Cupriavidus taiwanensis (strain DSM 17343 / BCRC 17206 / CCUG 44338 / CIP 107171 / LMG 19424 / R1) (Ralstonia taiwanensis (strain LMG 19424)) protein is Probable transcriptional regulatory protein RALTA_A0859.